Reading from the N-terminus, the 248-residue chain is Probable transcriptional regulatory protein Mrad2831_3553 (248 aa).

Belongs to the TACO1 family.

The protein localises to the cytoplasm. The sequence is that of Probable transcriptional regulatory protein Mrad2831_3553 from Methylobacterium radiotolerans (strain ATCC 27329 / DSM 1819 / JCM 2831 / NBRC 15690 / NCIMB 10815 / 0-1).